The primary structure comprises 385 residues: UPF0284 protein PMM0439 (385 aa).

The protein belongs to the UPF0284 family.

The chain is UPF0284 protein PMM0439 from Prochlorococcus marinus subsp. pastoris (strain CCMP1986 / NIES-2087 / MED4).